A 640-amino-acid polypeptide reads, in one-letter code: Protein ALTERED PHOSPHATE STARVATION RESPONSE 1 (640 aa).

The tract at residues 60–175 (TPLHLHHNPP…ATPQASSVVS (116 aa)) is disordered. The segment covering 68-87 (PPSPSPPPPPPPRPPPPPLS) has biased composition (pro residues). The segment covering 88–103 (PGSETTTWTTTTTSSV) has biased composition (low complexity). The segment covering 104 to 118 (LPPPPPPPPPPPPPS) has biased composition (pro residues). The segment covering 144–173 (TTATRTATGTGSDAAVTTAPTTATPQASSV) has biased composition (low complexity). A coiled-coil region spans residues 336–371 (KTEKAKKDVEKLESQLSVSSQAIQSASNEIIKLRET).

As to expression, expressed in the root tip of primary and lateral roots, specifically in the meristematic region, including the quiescent center and lateral root cap cells.

It localises to the nucleus. In terms of biological role, required for the coordination of cell differentiation and cell elongation in the root tip. Required for the coordination of cell processes necessary for correct root growth in response to phosphate starvation, through the modulation of the auxin transporter protein PIN7. This is Protein ALTERED PHOSPHATE STARVATION RESPONSE 1 from Arabidopsis thaliana (Mouse-ear cress).